Consider the following 41-residue polypeptide: Large ribosomal subunit protein bL36 (41 aa).

Belongs to the bacterial ribosomal protein bL36 family.

The polypeptide is Large ribosomal subunit protein bL36 (Pelagibacter ubique (strain HTCC1062)).